We begin with the raw amino-acid sequence, 155 residues long: 3-hydroxyacyl-[acyl-carrier-protein] dehydratase FabZ (155 aa).

Residue histidine 54 is part of the active site.

This sequence belongs to the thioester dehydratase family. FabZ subfamily.

Its subcellular location is the cytoplasm. The catalysed reaction is a (3R)-hydroxyacyl-[ACP] = a (2E)-enoyl-[ACP] + H2O. Involved in unsaturated fatty acids biosynthesis. Catalyzes the dehydration of short chain beta-hydroxyacyl-ACPs and long chain saturated and unsaturated beta-hydroxyacyl-ACPs. The polypeptide is 3-hydroxyacyl-[acyl-carrier-protein] dehydratase FabZ (Burkholderia lata (strain ATCC 17760 / DSM 23089 / LMG 22485 / NCIMB 9086 / R18194 / 383)).